A 924-amino-acid chain; its full sequence is MNYVGQLAGQVFVTVKELYKGLNPATLSGCIDIIVIRQPNGSLQCSPFHVRFGKMGVLRSREKVVDIEINGESVDLHMKLGDNGEAFFVQETDNDQEIIPMYLATSPILSEGAARMESQLKRNSVDRIRCLDPTTAAQGLPPSDTPSTGSLGKKRRKRRRKAQLDNLKRDDNVNSSEDEDMFPIEMSSDEDTAPMDGSRTLPNDVPPFQDDIPKENFPSISTHPQSASYPSSDREWSPSPSSLVDCQRTPPHLAEGVLSSSCPLQSCHFHASESPSGSRPSTPKSDSELVSKSADRLTPKNNLEMLWLWGELPQAAKSSSPHKMKESSPLGSRKTPDKMNFQAIHSESSDTFSDQSPTMARGLLIHQSKAQTEMQFVNEEDLESLGAAAPPSPVAEELKAPYPNTAQSSSKTDSPSRKKDKRSRHLGADGVYLDDLTDMDPEVAALYFPKNGDPGGLPKQASDNGARSANQSPQSVGGSGIDSGVESTSDSLRDLPSIAISLCGGLSDHREITKDAFLEQAVSYQQFADNPAIIDDPNLVVKVGNKYYNWTTAAPLLLAMQAFQKPLPKATVESIMRDKMPKKGGRWWFSWRGRNATIKEESKPEQCLTGKGHNTGEQPAQLGLATRIKHESSSSDEEHAAAKPSGSSHLSLLSNVSYKKTLRLTSEQLKSLKLKNGPNDVVFSVTTQYQGTCRCEGTIYLWNWDDKVIISDIDGTITRSDTLGHILPTLGKDWTHQGIAKLYHKVSQNGYKFLYCSARAIGMADMTRGYLHWVNERGTVLPQGPLLLSPSSLFSALHREVIEKKPEKFKVQCLTDIKNLFFPNTEPFYAAFGNRPADVYSYKQVGVSLNRIFTVNPKGELVQEHAKTNISSYVRLCEVVDHVFPLLKRSHSCDFPCSDTFSNFTFWREPLPPFENQDMHSASA.

Positions 1-108 are N-LIP; the sequence is MNYVGQLAGQ…IPMYLATSPI (108 aa). Residues Ser-106 and Ser-150 each carry the phosphoserine modification. Disordered regions lie at residues 133–248 and 269–297; these read PTTA…DCQR and FHAS…ADRL. Basic residues predominate over residues 152–161; sequence GKKRRKRRRK. The Nuclear localization signal signature appears at 153-158; the sequence is KKRRKR. A compositionally biased stretch (basic and acidic residues) spans 162 to 172; the sequence is AQLDNLKRDDN. Residues 176–193 are compositionally biased toward acidic residues; the sequence is SEDEDMFPIEMSSDEDTA. Polar residues-rich tracts occupy residues 218–229 and 273–284; these read PSISTHPQSASY and ESPSGSRPSTPK. A phosphoserine mark is found at Ser-285, Ser-287, and Ser-293. Residues 285-297 show a composition bias toward basic and acidic residues; the sequence is SDSELVSKSADRL. Thr-298 carries the post-translational modification Phosphothreonine. Disordered regions lie at residues 314 to 426 and 446 to 490; these read QAAK…SRHL and LYFP…STSD. Position 328 is a phosphoserine (Ser-328). Polar residues predominate over residues 343 to 358; sequence AIHSESSDTFSDQSPT. A Phosphoserine modification is found at Ser-392. Positions 404 to 413 are enriched in polar residues; the sequence is NTAQSSSKTD. Lys-459 carries the post-translational modification N6-acetyllysine. Over residues 461–476 the composition is skewed to polar residues; the sequence is ASDNGARSANQSPQSV. 3 positions are modified to phosphoserine: Ser-468, Ser-472, and Ser-483. Glycyl lysine isopeptide (Lys-Gly) (interchain with G-Cter in SUMO) cross-links involve residues Lys-599 and Lys-629. Positions 627-649 are disordered; that stretch reads RIKHESSSSDEEHAAAKPSGSSH. Basic and acidic residues predominate over residues 628–641; that stretch reads IKHESSSSDEEHAA. Position 629 is an N6-acetyllysine (Lys-629). Phosphoserine occurs at positions 634 and 635. The tract at residues 658–864 is C-LIP; the sequence is YKKTLRLTSE…VNPKGELVQE (207 aa). The short motif at 712-716 is the DXDXT motif element; that stretch reads DIDGT. The short motif at 723–727 is the LXXIL motif element; the sequence is LGHIL. Phosphoserine occurs at positions 921 and 923.

Belongs to the lipin family. Interacts (via LXXIL motif) with PPARA. Interacts with PPARGC1A. Interaction with PPARA and PPARGC1A leads to the formation of a complex that modulates gene transcription. Interacts with MEF2C. It depends on Mg(2+) as a cofactor. In terms of processing, phosphorylated at multiple sites in response to insulin. Phosphorylation is controlled by the mTOR signaling pathway. Phosphorylation is decreased by epinephrine. Phosphorylation may not directly affect the catalytic activity but may regulate the localization. Dephosphorylated by the CTDNEP1-CNEP1R1 complex. Phosphorylated at multiple sites by mTOR in response to insulin, leading to its inactivation. Phosphorylation does not affect the catalytic activity but regulates the localization. Phosphorylation is decreased by epinephrine. Dephosphorylated by the CTDNEP1-CNEP1R1 complex. Dephosphorylation following mTOR inhibition promotes its activity. Post-translationally, sumoylation is important in brain and is marginal in other tissues. Sumoylation facilitates nuclear localization of isoform 2 in neuronals cells and its transcriptional coactivator activity. In terms of processing, acetylation at Lys-459 and Lys-629 by KAT5 in response to fatty acids promotes translocation to the endoplasmic reticulum and synthesis of diacylglycerol. Specifically expressed in skeletal muscle. Also expressed prominently in adipose tissue, and testis. Lower expression also detected in kidney, lung, brain and liver. As to expression, predominant isoform in the liver. In terms of tissue distribution, predominant isoform in the brain.

It is found in the mitochondrion outer membrane. The protein localises to the cytoplasm. The protein resides in the nucleus membrane. It localises to the nucleus. Its subcellular location is the endoplasmic reticulum membrane. It carries out the reaction a 1,2-diacyl-sn-glycero-3-phosphate + H2O = a 1,2-diacyl-sn-glycerol + phosphate. It catalyses the reaction 1-octadecanoyl-2-(4Z,7Z,10Z,13Z,16Z,19Z-docosahexaenoyl)-sn-glycero-3-phosphate + H2O = 1-octadecanoyl-2-(4Z,7Z,10Z,13Z,16Z,19Z-docosahexaenoyl)-sn-glycerol + phosphate. The catalysed reaction is 1-octadecanoyl-2-(5Z,8Z,11Z,14Z-eicosatetraenoyl)-sn-glycero-3-phosphate + H2O = 1-octadecanoyl-2-(5Z,8Z,11Z,14Z-eicosatetraenoyl)-sn-glycerol + phosphate. The enzyme catalyses 1-octadecanoyl-2-(9Z,12Z-octadecadienoyl)-sn-glycero-3-phosphate + H2O = 1-octadecanoyl-2-(9Z,12Z)-octadecadienoyl-sn-glycerol + phosphate. It carries out the reaction 1-octadecanoyl-2-(9Z-octadecenoyl)-sn-glycero-3-phosphate + H2O = 1-octadecanoyl-2-(9Z-octadecenoyl)-sn-glycerol + phosphate. It catalyses the reaction 1-hexadecanoyl-2-(4Z,7Z,10Z,13Z,16Z,19Z-docosahexaenoyl)-sn-glycero-3-phosphate + H2O = 1-hexadecanoyl-2-(4Z,7Z,10Z,13Z,16Z,19Z-docosahexaenoyl)-sn-glycerol + phosphate. The catalysed reaction is 1,2-dioctadecanoyl-sn-glycero-3-phosphate + H2O = 1,2-dioctadecanoyl-sn-glycerol + phosphate. The enzyme catalyses 1-hexadecanoyl-2-(5Z,8Z,11Z,14Z-eicosatetraenoyl)-sn-glycero-3-phosphate + H2O = 1-hexadecanoyl-2-(5Z,8Z,11Z,14Z-eicosatetraenoyl)-sn-glycerol + phosphate. It carries out the reaction 1-hexadecanoyl-2-(9Z,12Z-octadecadienoyl)-sn-glycero-3-phosphate + H2O = 1-hexadecanoyl-2-(9Z,12Z-octadecadienoyl)-sn-glycerol + phosphate. It catalyses the reaction 1-hexadecanoyl-2-(9Z-octadecenoyl)-sn-glycero-3-phosphate + H2O = 1-hexadecanoyl-2-(9Z-octadecenoyl)-sn-glycerol + phosphate. The catalysed reaction is 1,2-di-(4Z,7Z,10Z,13Z,16Z,19Z-docosahexaenoyl)-sn-glycero-3-phosphate + H2O = 1,2-di-(4Z,7Z,10Z,13Z,16Z,19Z-docosahexaenoyl)-sn-glycerol + phosphate. The enzyme catalyses 1,2-di-(5Z,8Z,11Z,14Z)-eicosatetraenoyl-sn-glycero-3-phosphate + H2O = 1,2-di-(5Z,8Z,11Z,14Z)-eicosatetraenoyl-sn-glycerol + phosphate. It carries out the reaction 1,2-di-(9Z,12Z-octadecadienoyl)-sn-glycero-3-phosphate + H2O = 1,2-di-(9Z,12Z-octadecadienoyl)-sn-glycerol + phosphate. It catalyses the reaction 1,2-di-(9Z-octadecenoyl)-sn-glycero-3-phosphate + H2O = 1,2-di-(9Z-octadecenoyl)-sn-glycerol + phosphate. The catalysed reaction is 1,2-dihexadecanoyl-sn-glycero-3-phosphate + H2O = 1,2-dihexadecanoyl-sn-glycerol + phosphate. With respect to regulation, inhibited by N-ethylmaleimide treatment. Acts as a magnesium-dependent phosphatidate phosphatase enzyme which catalyzes the conversion of phosphatidic acid to diacylglycerol during triglyceride, phosphatidylcholine and phosphatidylethanolamine biosynthesis and therefore controls the metabolism of fatty acids at different levels. Is involved in adipocyte differentiation. Also acts as nuclear transcriptional coactivator for PPARGC1A/PPARA regulatory pathway to modulate lipid metabolism gene expression. In terms of biological role, recruited at the mitochondrion outer membrane and is involved in mitochondrial fission by converting phosphatidic acid to diacylglycerol. The sequence is that of Phosphatidate phosphatase LPIN1 (Lpin1) from Mus musculus (Mouse).